The following is a 663-amino-acid chain: UvrABC system protein B (663 aa).

The Helicase ATP-binding domain occupies Asp26 to Pro414. Gly39 to Thr46 provides a ligand contact to ATP. The Beta-hairpin signature appears at Tyr92–Ile115. Residues Gln430 to Leu596 form the Helicase C-terminal domain. Positions Ala624–Gln659 constitute a UVR domain.

Belongs to the UvrB family. As to quaternary structure, forms a heterotetramer with UvrA during the search for lesions. Interacts with UvrC in an incision complex.

The protein resides in the cytoplasm. Its function is as follows. The UvrABC repair system catalyzes the recognition and processing of DNA lesions. A damage recognition complex composed of 2 UvrA and 2 UvrB subunits scans DNA for abnormalities. Upon binding of the UvrA(2)B(2) complex to a putative damaged site, the DNA wraps around one UvrB monomer. DNA wrap is dependent on ATP binding by UvrB and probably causes local melting of the DNA helix, facilitating insertion of UvrB beta-hairpin between the DNA strands. Then UvrB probes one DNA strand for the presence of a lesion. If a lesion is found the UvrA subunits dissociate and the UvrB-DNA preincision complex is formed. This complex is subsequently bound by UvrC and the second UvrB is released. If no lesion is found, the DNA wraps around the other UvrB subunit that will check the other stand for damage. In Legionella pneumophila (strain Paris), this protein is UvrABC system protein B.